Consider the following 559-residue polypeptide: Oxygen-dependent choline dehydrogenase (559 aa).

Position 4–33 (4–33 (DYIIIGAGSAGNVLAARLTEESDVSVLLLE)) interacts with FAD. The tract at residues 182 to 202 (EGFGPMDRTVTPKGRRASTAR) is disordered. His471 acts as the Proton acceptor in catalysis.

Belongs to the GMC oxidoreductase family. FAD serves as cofactor.

The catalysed reaction is choline + A = betaine aldehyde + AH2. The enzyme catalyses betaine aldehyde + NAD(+) + H2O = glycine betaine + NADH + 2 H(+). It functions in the pathway amine and polyamine biosynthesis; betaine biosynthesis via choline pathway; betaine aldehyde from choline (cytochrome c reductase route): step 1/1. In terms of biological role, involved in the biosynthesis of the osmoprotectant glycine betaine. Catalyzes the oxidation of choline to betaine aldehyde and betaine aldehyde to glycine betaine at the same rate. The polypeptide is Oxygen-dependent choline dehydrogenase (Pectobacterium atrosepticum (strain SCRI 1043 / ATCC BAA-672) (Erwinia carotovora subsp. atroseptica)).